Reading from the N-terminus, the 209-residue chain is Holliday junction branch migration complex subunit RuvA (209 aa).

A domain I region spans residues 1–64 (MIGRIRGMLI…EDAQSLYGFA (64 aa)). The tract at residues 65-143 (SRLDRNLFRL…QLEGQFVPSQ (79 aa)) is domain II. The segment at 144-157 (PDVPTGAGAATASQ) is flexible linker. The tract at residues 158-209 (AGPDPREEAEAALIALGYKPQEAAKAISKVAGPDMNSETLIRLALKNMIPAG) is domain III.

Belongs to the RuvA family. As to quaternary structure, homotetramer. Forms an RuvA(8)-RuvB(12)-Holliday junction (HJ) complex. HJ DNA is sandwiched between 2 RuvA tetramers; dsDNA enters through RuvA and exits via RuvB. An RuvB hexamer assembles on each DNA strand where it exits the tetramer. Each RuvB hexamer is contacted by two RuvA subunits (via domain III) on 2 adjacent RuvB subunits; this complex drives branch migration. In the full resolvosome a probable DNA-RuvA(4)-RuvB(12)-RuvC(2) complex forms which resolves the HJ.

Its subcellular location is the cytoplasm. Its function is as follows. The RuvA-RuvB-RuvC complex processes Holliday junction (HJ) DNA during genetic recombination and DNA repair, while the RuvA-RuvB complex plays an important role in the rescue of blocked DNA replication forks via replication fork reversal (RFR). RuvA specifically binds to HJ cruciform DNA, conferring on it an open structure. The RuvB hexamer acts as an ATP-dependent pump, pulling dsDNA into and through the RuvAB complex. HJ branch migration allows RuvC to scan DNA until it finds its consensus sequence, where it cleaves and resolves the cruciform DNA. The chain is Holliday junction branch migration complex subunit RuvA from Marinobacter nauticus (strain ATCC 700491 / DSM 11845 / VT8) (Marinobacter aquaeolei).